A 465-amino-acid polypeptide reads, in one-letter code: Cysteine--tRNA ligase (465 aa).

Cys-30 is a binding site for Zn(2+). A 'HIGH' region motif is present at residues 32–42 (PTVYDRAHLGN). Zn(2+) is bound by residues Cys-213, His-238, and Glu-242. A 'KMSKS' region motif is present at residues 271–275 (KMSKS). Lys-274 is an ATP binding site.

It belongs to the class-I aminoacyl-tRNA synthetase family. Monomer. It depends on Zn(2+) as a cofactor.

It is found in the cytoplasm. The enzyme catalyses tRNA(Cys) + L-cysteine + ATP = L-cysteinyl-tRNA(Cys) + AMP + diphosphate. This Ruegeria pomeroyi (strain ATCC 700808 / DSM 15171 / DSS-3) (Silicibacter pomeroyi) protein is Cysteine--tRNA ligase.